A 150-amino-acid polypeptide reads, in one-letter code: MLYHLFVNNQIKLQDDFKAEAVATIRSSVFNSKGGTTVFNFLSAGENILLHISIRPGENAIVFNSRTKGGAWGPEERVPYAGKFKGPNPSITVLDHGDRFQILFDNATAIYYTKRIKENAAAIAYSAENSLFSSPVTVDIHGLLPPLPPA.

The Galectin domain maps to 9 to 141; it reads NQIKLQDDFK…FSSPVTVDIH (133 aa). His-51, Arg-55, Asn-64, and Glu-75 together coordinate a carbohydrate.

Homotetramer. Oligomerization is required for carbohydrate binding. As to expression, most abundant in fruiting bodies. Very low levels of expression in asexual vegetative mycelia.

It localises to the secreted. Its subcellular location is the extracellular space. The protein resides in the extracellular matrix. The protein localises to the cell wall. It is found in the endomembrane system. Its function is as follows. Binds lactose. May play a role in fruiting body formation. This Coprinopsis cinerea (strain Okayama-7 / 130 / ATCC MYA-4618 / FGSC 9003) (Inky cap fungus) protein is Galectin-1 (Cgl1).